The following is a 257-amino-acid chain: Zinc transporter ZupT (257 aa).

The next 8 membrane-spanning stretches (helical) occupy residues 5-25 (LILTLLAGAATFIGAFLGVLG), 32-52 (VLAFSLGFAAGIMLLISLMEM), 61-81 (GMSPVLGYGMFIIGLLGYFGL), 109-129 (AILLTLGISLHNFPEGIATFV), 137-157 (LGFGIALAVALHNIPEGLAVA), 171-191 (IFWAGISGMAEILGGVLAWLI), 195-215 (LVSPIVMAAIMAAVAGIMVAL), and 236-256 (GVLCGMSIMGLSLVILQTIGI). Fe(2+) contacts are provided by asparagine 120 and glutamate 123. Residues glutamate 123 and histidine 148 each coordinate Zn(2+). Residues asparagine 149, glutamate 152, and glutamate 181 each contribute to the Fe(2+) site. Glutamate 152 lines the Zn(2+) pocket.

It belongs to the ZIP transporter (TC 2.A.5) family. ZupT subfamily.

The protein resides in the cell inner membrane. It catalyses the reaction Zn(2+)(in) = Zn(2+)(out). Its function is as follows. Mediates zinc uptake. May also transport other divalent cations. This is Zinc transporter ZupT from Salmonella heidelberg (strain SL476).